A 488-amino-acid chain; its full sequence is 3-octaprenyl-4-hydroxybenzoate carboxy-lyase (488 aa).

Position 172 (Asn-172) interacts with Mn(2+). Prenylated FMN-binding positions include 175-177 (IYR), 189-191 (RWL), and 194-195 (RG). Glu-238 serves as a coordination point for Mn(2+). Residue Asp-287 is the Proton donor of the active site.

It belongs to the UbiD family. As to quaternary structure, homohexamer. The cofactor is prenylated FMN. It depends on Mn(2+) as a cofactor.

The protein resides in the cell membrane. The enzyme catalyses a 4-hydroxy-3-(all-trans-polyprenyl)benzoate + H(+) = a 2-(all-trans-polyprenyl)phenol + CO2. It functions in the pathway cofactor biosynthesis; ubiquinone biosynthesis. Its function is as follows. Catalyzes the decarboxylation of 3-octaprenyl-4-hydroxy benzoate to 2-octaprenylphenol, an intermediate step in ubiquinone biosynthesis. This is 3-octaprenyl-4-hydroxybenzoate carboxy-lyase from Pseudomonas aeruginosa (strain LESB58).